A 367-amino-acid chain; its full sequence is UDP-N-acetylglucosamine--N-acetylmuramyl-(pentapeptide) pyrophosphoryl-undecaprenol N-acetylglucosamine transferase (367 aa).

UDP-N-acetyl-alpha-D-glucosamine-binding positions include 11-13 (TAG), asparagine 125, arginine 163, serine 197, and glutamine 289.

It belongs to the glycosyltransferase 28 family. MurG subfamily.

It is found in the cell membrane. It catalyses the reaction di-trans,octa-cis-undecaprenyl diphospho-N-acetyl-alpha-D-muramoyl-L-alanyl-D-glutamyl-meso-2,6-diaminopimeloyl-D-alanyl-D-alanine + UDP-N-acetyl-alpha-D-glucosamine = di-trans,octa-cis-undecaprenyl diphospho-[N-acetyl-alpha-D-glucosaminyl-(1-&gt;4)]-N-acetyl-alpha-D-muramoyl-L-alanyl-D-glutamyl-meso-2,6-diaminopimeloyl-D-alanyl-D-alanine + UDP + H(+). It functions in the pathway cell wall biogenesis; peptidoglycan biosynthesis. Cell wall formation. Catalyzes the transfer of a GlcNAc subunit on undecaprenyl-pyrophosphoryl-MurNAc-pentapeptide (lipid intermediate I) to form undecaprenyl-pyrophosphoryl-MurNAc-(pentapeptide)GlcNAc (lipid intermediate II). The protein is UDP-N-acetylglucosamine--N-acetylmuramyl-(pentapeptide) pyrophosphoryl-undecaprenol N-acetylglucosamine transferase of Clavibacter sepedonicus (Clavibacter michiganensis subsp. sepedonicus).